The primary structure comprises 114 residues: MNFGKAAIFGVVLFCLLWTEGAQAGLTFLSPADMQKIAERQSQNKLRHGNMNRRGVEDDLAGEEIGVTFPLDMKMTQEQFQKQRAAVQDFLYSSLLSLGSVQDTEDKNENPQSQ.

Positions 1–24 (MNFGKAAIFGVVLFCLLWTEGAQA) are cleaved as a signal peptide. Residue T27 is the site of O-decanoyl threonine; alternate attachment. A lipid anchor (O-octanoyl threonine; alternate) is attached at T27. Positions 55-114 (GVEDDLAGEEIGVTFPLDMKMTQEQFQKQRAAVQDFLYSSLLSLGSVQDTEDKNENPQSQ) are cleaved as a propeptide — removed in mature form.

The protein belongs to the motilin family. O-octanoylated by GOAT/MBOAT4. O-octanoylation or O-decanoylation is essential for activity. The O-decanoylated form ghrelin-27-C10 differs in the length of the carbon backbone of the carboxylic acid bound to Thr-27. 33% of frog ghrelin is O-decanoylated. Post-translationally, 80% of frog ghrelin has Asn-52 cleaved from its C-terminus giving rise to ghrelin-27. In terms of tissue distribution, high levels in stomach. Moderate levels in small intestine, pancreas and testis. Low levels in heart, lung and gall bladder.

The protein resides in the secreted. Functionally, ligand for growth hormone secretagogue receptor type 1 (GHSR). Induces the release of growth hormone from the pituitary. Has an appetite-stimulating effect, induces adiposity and stimulates gastric acid secretion. Involved in growth regulation. This chain is Ghrelin (GHRL), found in Aquarana catesbeiana (American bullfrog).